The primary structure comprises 349 residues: RING-H2 finger protein ATL48 (349 aa).

Residues 1–85 (MSSVEPDMED…DNPWKKLLLS (85 aa)) enclose the HIG1 domain. The residue at position 2 (Ser-2) is an N-acetylserine. Helical transmembrane passes span 21–41 (PLVPLGALMTAGVLTAGLISF), 55–75 (ARVVVQGATVALMVGTGYYYG), and 121–141 (CLVISGLALIIVFLGVLYLIF). Residues 207-249 (CAVCLNEFSDTDKLRLLPVCSHAFHLHCIDTWLLSNSTCPLCR) form an RING-type; atypical zinc finger.

The protein belongs to the RING-type zinc finger family. ATL subfamily.

It localises to the membrane. It catalyses the reaction S-ubiquitinyl-[E2 ubiquitin-conjugating enzyme]-L-cysteine + [acceptor protein]-L-lysine = [E2 ubiquitin-conjugating enzyme]-L-cysteine + N(6)-ubiquitinyl-[acceptor protein]-L-lysine.. It functions in the pathway protein modification; protein ubiquitination. This Arabidopsis thaliana (Mouse-ear cress) protein is RING-H2 finger protein ATL48 (ATL48).